We begin with the raw amino-acid sequence, 239 residues long: MNIGVIFAGGVGRRMNTKGKPKQFLEVHGKPIIVHTIDIFQNTEAIDAVVVVCVSDWLDYMNNLVERFNLTKVKAVVAGGETGQMSIFKGLEAAEQLATDDAVVLIHDGVRPLINEEVINANIQSVKETGSAVTSVRAKETVVLVNDSSKISEVVDRTRSFIAKAPQSFYLSDILSIERDAISKGITDAIDSSTLMGMYNRELTIVEGPYENIKITTPDDFYMFKALYDARENEQIYGM.

CTP contacts are provided by residues 7–10 and 80–86; these read FAGG and GETGQMS.

This sequence belongs to the IspD/TarI cytidylyltransferase family. TarI subfamily.

It carries out the reaction D-ribitol 5-phosphate + CTP + H(+) = CDP-L-ribitol + diphosphate. Its pathway is cell wall biogenesis; poly(ribitol phosphate) teichoic acid biosynthesis. Functionally, catalyzes the transfer of the cytidylyl group of CTP to D-ribitol 5-phosphate. The protein is Ribitol-5-phosphate cytidylyltransferase of Streptococcus agalactiae serotype Ia (strain ATCC 27591 / A909 / CDC SS700).